Reading from the N-terminus, the 59-residue chain is MTFITLTIGLSLRTIFLIFIFLPPPHLLARTTSLTRRQTRKTTIKVFVFILPFYQTPNW.

A signal peptide spans 1-29 (MTFITLTIGLSLRTIFLIFIFLPPPHLLA).

It belongs to the non-disulfide-bridged peptide (NDBP) superfamily. Expressed by the venom gland.

The protein localises to the secreted. This Lychas mucronatus (Chinese swimming scorpion) protein is Venom protein 27.7.